The sequence spans 426 residues: Torsin-4A (426 aa).

Residues 41-60 (QPGTEPDSGTGTLGPTGSLG) form a disordered region. Low complexity predominate over residues 48 to 60 (SGTGTLGPTGSLG). Residues S58 and S76 each carry the phosphoserine modification. A Phosphothreonine modification is found at T84. Phosphoserine is present on S101. The helical transmembrane segment at 117–133 (CLLLLVAIVGFQVLNAI) threads the bilayer. 189–196 (GPSGVGKS) contributes to the ATP binding site.

The protein belongs to the ClpA/ClpB family. Torsin subfamily.

The protein localises to the membrane. The protein is Torsin-4A (Tor4a) of Mus musculus (Mouse).